A 391-amino-acid polypeptide reads, in one-letter code: MDHSISPEYNFPAITRCSLSNSLPHRPPSPLPSSADIHRFYNSLSPSAPSVPVSSEMESMEAVEKILNYKFSNKSLLKEAITHTSCTDFPSYERLEFIGDSAIGLAISNYLYLTYPSLEPHDLSLLRAANVSTEKLARVSLNHGLYSFLRRNAPSLDEKVKEFSEAVGKEDDLSVSYGGLVKAPKVLADLFESLAGAVYVDVNFDLQRLWVIFRGLLEPIVTLDDLQKQPQPVSMLFKLCHKHKKRIDIKNWKDGNVSIAVIYLDDELLASGRAENKDIARLIAAKEALRKLSEVFPVEMVIDEDSVEIQLTHAKTKLNEICLKKKWPKPIYSVEEDRSSVQGKRFVCSAKIKITEEKTLYMKGDEQSKIKKAESSSAYHMIRALRKSHYL.

The Nuclear export signal signature appears at 7–26 (PEYNFPAITRCSLSNSLPHR). Residues 60-203 (MEAVEKILNY…LAGAVYVDVN (144 aa)) enclose the RNase III domain. Mg(2+) contacts are provided by glutamate 96, aspartate 189, and glutamate 192. 2 consecutive DRBM domains span residues 218–294 (EPIV…KLSE) and 313–387 (HAKT…ALRK). A disulfide bridge connects residues cysteine 240 and cysteine 322. Residues 371–387 (KKAESSSAYHMIRALRK) carry the Bipartite nuclear localization motif.

As to quaternary structure, homodimer; disulfide-linked. Requires Mg(2+) as cofactor. It depends on Mn(2+) as a cofactor. As to expression, expressed in seeds, leaves and flower buds.

It localises to the nucleus. It is found in the cytoplasm. Its function is as follows. Ribonuclease that cleaves double-stranded RNA (dsRNA). Required for 3'-external transcribed spacer (ETS) cleavage of the pre-rRNA precursors. May promote the production of 21 nucleotide small interfering RNA (siRNA) during post-transcriptional gene silencing (PTGS). In Arabidopsis thaliana (Mouse-ear cress), this protein is Ribonuclease 3-like protein 2 (RTL2).